Here is a 134-residue protein sequence, read N- to C-terminus: Profilin-1 (134 aa).

A disulfide bridge links cysteine 13 with cysteine 118. An Involved in PIP2 interaction motif is present at residues 84 to 100; the sequence is AVIRGKKGSGGITTKKT. Threonine 114 bears the Phosphothreonine mark.

The protein belongs to the profilin family. In terms of assembly, occurs in many kinds of cells as a complex with monomeric actin in a 1:1 ratio. Post-translationally, phosphorylated by MAP kinases.

It localises to the cytoplasm. Its subcellular location is the cytoskeleton. Functionally, binds to actin and affects the structure of the cytoskeleton. At high concentrations, profilin prevents the polymerization of actin, whereas it enhances it at low concentrations. This is Profilin-1 from Olea europaea (Common olive).